Here is a 661-residue protein sequence, read N- to C-terminus: UvrABC system protein B (661 aa).

A Helicase ATP-binding domain is found at 23–180; the sequence is EGLQKGYRIQ…THLARIGYER (158 aa). An ATP-binding site is contributed by 36-43; sequence GVTGSGKT. Positions 89-112 match the Beta-hairpin motif; sequence YYDYYQPEAYIPTRDLYIEKNADI. The Helicase C-terminal domain occupies 426 to 592; the sequence is QIDDLVNEIA…TIIKPLDEEI (167 aa). Residues 620 to 655 form the UVR domain; sequence EEYIALLEEEMYKAASELRYEDAARLRDELFNIREK.

It belongs to the UvrB family. In terms of assembly, forms a heterotetramer with UvrA during the search for lesions. Interacts with UvrC in an incision complex.

Its subcellular location is the cytoplasm. In terms of biological role, the UvrABC repair system catalyzes the recognition and processing of DNA lesions. A damage recognition complex composed of 2 UvrA and 2 UvrB subunits scans DNA for abnormalities. Upon binding of the UvrA(2)B(2) complex to a putative damaged site, the DNA wraps around one UvrB monomer. DNA wrap is dependent on ATP binding by UvrB and probably causes local melting of the DNA helix, facilitating insertion of UvrB beta-hairpin between the DNA strands. Then UvrB probes one DNA strand for the presence of a lesion. If a lesion is found the UvrA subunits dissociate and the UvrB-DNA preincision complex is formed. This complex is subsequently bound by UvrC and the second UvrB is released. If no lesion is found, the DNA wraps around the other UvrB subunit that will check the other stand for damage. The protein is UvrABC system protein B of Thermosipho africanus (strain TCF52B).